Consider the following 178-residue polypeptide: Interleukin-10 (178 aa).

The N-terminal stretch at 1 to 18 is a signal peptide; that stretch reads MPRSALLCCLILLAGVAA. Cystine bridges form between Cys30/Cys126 and Cys80/Cys132. Asn134 carries an N-linked (GlcNAc...) asparagine glycan.

Belongs to the IL-10 family. Homodimer. Interacts with IL10RA and IL10RB.

It localises to the secreted. In terms of biological role, major immune regulatory cytokine that acts on many cells of the immune system where it has profound anti-inflammatory functions, limiting excessive tissue disruption caused by inflammation. Mechanistically, IL10 binds to its heterotetrameric receptor comprising IL10RA and IL10RB leading to JAK1 and STAT2-mediated phosphorylation of STAT3. In turn, STAT3 translocates to the nucleus where it drives expression of anti-inflammatory mediators. Targets antigen-presenting cells (APCs) such as macrophages and monocytes and inhibits their release of pro-inflammatory cytokines including granulocyte-macrophage colony-stimulating factor /GM-CSF, granulocyte colony-stimulating factor/G-CSF, IL-1 alpha, IL-1 beta, IL-6, IL-8 and TNF-alpha. Also interferes with antigen presentation by reducing the expression of MHC-class II and co-stimulatory molecules, thereby inhibiting their ability to induce T cell activation. In addition, controls the inflammatory response of macrophages by reprogramming essential metabolic pathways including mTOR signaling. This Lama glama (Llama) protein is Interleukin-10 (IL10).